Here is a 176-residue protein sequence, read N- to C-terminus: 2-C-methyl-D-erythritol 2,4-cyclodiphosphate synthase (176 aa).

Residues D22 and H24 each coordinate a divalent metal cation. 4-CDP-2-C-methyl-D-erythritol 2-phosphate contacts are provided by residues 22–24 and 48–49; these read DVH and HS. H56 is a binding site for a divalent metal cation. Residues 70-72, 146-149, F153, and R156 contribute to the 4-CDP-2-C-methyl-D-erythritol 2-phosphate site; these read DIG and TTSE.

It belongs to the IspF family. In terms of assembly, homotrimer. A divalent metal cation serves as cofactor.

It carries out the reaction 4-CDP-2-C-methyl-D-erythritol 2-phosphate = 2-C-methyl-D-erythritol 2,4-cyclic diphosphate + CMP. It functions in the pathway isoprenoid biosynthesis; isopentenyl diphosphate biosynthesis via DXP pathway; isopentenyl diphosphate from 1-deoxy-D-xylulose 5-phosphate: step 4/6. In terms of biological role, involved in the biosynthesis of isopentenyl diphosphate (IPP) and dimethylallyl diphosphate (DMAPP), two major building blocks of isoprenoid compounds. Catalyzes the conversion of 4-diphosphocytidyl-2-C-methyl-D-erythritol 2-phosphate (CDP-ME2P) to 2-C-methyl-D-erythritol 2,4-cyclodiphosphate (ME-CPP) with a corresponding release of cytidine 5-monophosphate (CMP). This Xylella fastidiosa (strain 9a5c) protein is 2-C-methyl-D-erythritol 2,4-cyclodiphosphate synthase.